The sequence spans 197 residues: Large ribosomal subunit protein eL15 (197 aa).

The span at 163–172 (GKTSAGRKGR) shows a compositional bias: basic residues. The tract at residues 163–197 (GKTSAGRKGRGMQTRGTGTEKTRPSVRSNLNRSKK) is disordered. Residues 186–197 (PSVRSNLNRSKK) show a composition bias toward polar residues.

This sequence belongs to the eukaryotic ribosomal protein eL15 family.

The protein is Large ribosomal subunit protein eL15 of Methanococcoides burtonii (strain DSM 6242 / NBRC 107633 / OCM 468 / ACE-M).